Here is a 196-residue protein sequence, read N- to C-terminus: Pyridoxal 5'-phosphate synthase subunit PdxT (196 aa).

46 to 48 (GES) provides a ligand contact to L-glutamine. Cysteine 78 (nucleophile) is an active-site residue. Residues arginine 105 and 133 to 134 (IR) each bind L-glutamine. Catalysis depends on charge relay system residues histidine 169 and glutamate 171.

The protein belongs to the glutaminase PdxT/SNO family. In the presence of PdxS, forms a dodecamer of heterodimers. Only shows activity in the heterodimer.

It catalyses the reaction aldehydo-D-ribose 5-phosphate + D-glyceraldehyde 3-phosphate + L-glutamine = pyridoxal 5'-phosphate + L-glutamate + phosphate + 3 H2O + H(+). It carries out the reaction L-glutamine + H2O = L-glutamate + NH4(+). It functions in the pathway cofactor biosynthesis; pyridoxal 5'-phosphate biosynthesis. Its function is as follows. Catalyzes the hydrolysis of glutamine to glutamate and ammonia as part of the biosynthesis of pyridoxal 5'-phosphate. The resulting ammonia molecule is channeled to the active site of PdxS. This chain is Pyridoxal 5'-phosphate synthase subunit PdxT, found in Geobacillus stearothermophilus (Bacillus stearothermophilus).